We begin with the raw amino-acid sequence, 457 residues long: tRNA-2-methylthio-N(6)-dimethylallyladenosine synthase (457 aa).

One can recognise an MTTase N-terminal domain in the interval 3–120 (KKVYVKTFGC…LPQMIDKRRE (118 aa)). 6 residues coordinate [4Fe-4S] cluster: Cys12, Cys49, Cys83, Cys157, Cys161, and Cys164. Positions 143–377 (RVDGPSAFVS…QATIEENVQR (235 aa)) constitute a Radical SAM core domain. One can recognise a TRAM domain in the interval 380–447 (DSMVGKIERI…PHSLRGELVL (68 aa)).

It belongs to the methylthiotransferase family. MiaB subfamily. As to quaternary structure, monomer. The cofactor is [4Fe-4S] cluster.

The protein localises to the cytoplasm. The catalysed reaction is N(6)-dimethylallyladenosine(37) in tRNA + (sulfur carrier)-SH + AH2 + 2 S-adenosyl-L-methionine = 2-methylsulfanyl-N(6)-dimethylallyladenosine(37) in tRNA + (sulfur carrier)-H + 5'-deoxyadenosine + L-methionine + A + S-adenosyl-L-homocysteine + 2 H(+). Functionally, catalyzes the methylthiolation of N6-(dimethylallyl)adenosine (i(6)A), leading to the formation of 2-methylthio-N6-(dimethylallyl)adenosine (ms(2)i(6)A) at position 37 in tRNAs that read codons beginning with uridine. The chain is tRNA-2-methylthio-N(6)-dimethylallyladenosine synthase from Paraburkholderia phytofirmans (strain DSM 17436 / LMG 22146 / PsJN) (Burkholderia phytofirmans).